A 346-amino-acid chain; its full sequence is Uroporphyrinogen decarboxylase (346 aa).

Substrate is bound by residues 26–30, D76, Y153, S208, and H323; that span reads RQAGR.

The protein belongs to the uroporphyrinogen decarboxylase family. As to quaternary structure, homodimer.

It localises to the cytoplasm. It carries out the reaction uroporphyrinogen III + 4 H(+) = coproporphyrinogen III + 4 CO2. Its pathway is porphyrin-containing compound metabolism; protoporphyrin-IX biosynthesis; coproporphyrinogen-III from 5-aminolevulinate: step 4/4. In terms of biological role, catalyzes the decarboxylation of four acetate groups of uroporphyrinogen-III to yield coproporphyrinogen-III. The protein is Uroporphyrinogen decarboxylase of Prochlorococcus marinus (strain MIT 9515).